The chain runs to 519 residues: Steroid 17-alpha-hydroxylase/17,20 lyase (519 aa).

C455 contributes to the heme binding site.

The protein belongs to the cytochrome P450 family. The cofactor is heme.

It is found in the membrane. It carries out the reaction a C21-steroid + reduced [NADPH--hemoprotein reductase] + O2 = a 17alpha-hydroxy-C21-steroid + oxidized [NADPH--hemoprotein reductase] + H2O + H(+). The enzyme catalyses 17alpha-hydroxyprogesterone + reduced [NADPH--hemoprotein reductase] + O2 = androst-4-ene-3,17-dione + acetate + oxidized [NADPH--hemoprotein reductase] + H2O + 2 H(+). It catalyses the reaction 17alpha-hydroxypregnenolone + reduced [NADPH--hemoprotein reductase] + O2 = 3beta-hydroxyandrost-5-en-17-one + acetate + oxidized [NADPH--hemoprotein reductase] + H2O + 2 H(+). Its pathway is lipid metabolism; steroid biosynthesis. Conversion of pregnenolone and progesterone to their 17-alpha-hydroxylated products and subsequently to dehydroepiandrosterone (DHEA) and androstenedione. Catalyzes both the 17-alpha-hydroxylation and the 17,20-lyase reaction. In Rana dybowskii (Dybovsky's frog), this protein is Steroid 17-alpha-hydroxylase/17,20 lyase (CYP17A1).